A 475-amino-acid chain; its full sequence is Ribulose bisphosphate carboxylase large chain (475 aa).

The propeptide occupies 1–2 (MS). Residue Pro3 is modified to N-acetylproline. Lys14 is modified (N6,N6,N6-trimethyllysine). Substrate-binding residues include Asn123 and Thr173. The active-site Proton acceptor is the Lys175. Residue Lys177 coordinates substrate. Residues Lys201, Asp203, and Glu204 each coordinate Mg(2+). At Lys201 the chain carries N6-carboxylysine. The active-site Proton acceptor is His294. Positions 295, 327, and 379 each coordinate substrate.

It belongs to the RuBisCO large chain family. Type I subfamily. As to quaternary structure, heterohexadecamer of 8 large chains and 8 small chains; disulfide-linked. The disulfide link is formed within the large subunit homodimers. The cofactor is Mg(2+). In terms of processing, the disulfide bond which can form in the large chain dimeric partners within the hexadecamer appears to be associated with oxidative stress and protein turnover.

It is found in the plastid. The protein resides in the chloroplast. The enzyme catalyses 2 (2R)-3-phosphoglycerate + 2 H(+) = D-ribulose 1,5-bisphosphate + CO2 + H2O. It carries out the reaction D-ribulose 1,5-bisphosphate + O2 = 2-phosphoglycolate + (2R)-3-phosphoglycerate + 2 H(+). Its function is as follows. RuBisCO catalyzes two reactions: the carboxylation of D-ribulose 1,5-bisphosphate, the primary event in carbon dioxide fixation, as well as the oxidative fragmentation of the pentose substrate in the photorespiration process. Both reactions occur simultaneously and in competition at the same active site. The chain is Ribulose bisphosphate carboxylase large chain from Pseudolarix amabilis (Golden larch).